A 314-amino-acid chain; its full sequence is Formimidoylglutamase (314 aa).

His127, Asp151, His153, Asp155, Asp239, and Asp241 together coordinate Mn(2+).

It belongs to the arginase family. Mn(2+) is required as a cofactor.

The enzyme catalyses N-formimidoyl-L-glutamate + H2O = formamide + L-glutamate. The protein operates within amino-acid degradation; L-histidine degradation into L-glutamate; L-glutamate from N-formimidoyl-L-glutamate (hydrolase route): step 1/1. Its function is as follows. Catalyzes the conversion of N-formimidoyl-L-glutamate to L-glutamate and formamide. The sequence is that of Formimidoylglutamase from Corynebacterium efficiens (strain DSM 44549 / YS-314 / AJ 12310 / JCM 11189 / NBRC 100395).